A 108-amino-acid chain; its full sequence is Urease subunit beta (108 aa).

This sequence belongs to the urease beta subunit family. Heterotrimer of UreA (gamma), UreB (beta) and UreC (alpha) subunits. Three heterotrimers associate to form the active enzyme.

It is found in the cytoplasm. The catalysed reaction is urea + 2 H2O + H(+) = hydrogencarbonate + 2 NH4(+). The protein operates within nitrogen metabolism; urea degradation; CO(2) and NH(3) from urea (urease route): step 1/1. The sequence is that of Urease subunit beta from Chromohalobacter salexigens (strain ATCC BAA-138 / DSM 3043 / CIP 106854 / NCIMB 13768 / 1H11).